The chain runs to 437 residues: Glutamate-1-semialdehyde 2,1-aminomutase (437 aa).

Lys272 carries the N6-(pyridoxal phosphate)lysine modification.

It belongs to the class-III pyridoxal-phosphate-dependent aminotransferase family. HemL subfamily. As to quaternary structure, homodimer. The cofactor is pyridoxal 5'-phosphate.

It is found in the cytoplasm. It catalyses the reaction (S)-4-amino-5-oxopentanoate = 5-aminolevulinate. It participates in porphyrin-containing compound metabolism; protoporphyrin-IX biosynthesis; 5-aminolevulinate from L-glutamyl-tRNA(Glu): step 2/2. This Moorella thermoacetica (strain ATCC 39073 / JCM 9320) protein is Glutamate-1-semialdehyde 2,1-aminomutase.